Consider the following 170-residue polypeptide: Probable host range protein 2 (170 aa).

Residues 145 to 170 form a disordered region; the sequence is SDSDSDVDDRAELHKRNNDSDSDDYT. Positions 152 to 163 are enriched in basic and acidic residues; that stretch reads DDRAELHKRNND.

Belongs to the poxviridae C7 protein family.

Plays a role for multiplication of the virus in different cell types. This Bos taurus (Bovine) protein is Probable host range protein 2.